Here is a 276-residue protein sequence, read N- to C-terminus: MNVFISVVLFLGSARAASKTGDDEWVHLPNKCEVCKFVSIEMKSAFDETGKTKEVIDTNYRFLDDKGAPPIKYVKSDIRFIEVTENVCSRIMQYNLHKERDGSNRFAKGMSETFSTLHNLVNKGVKVVMDIPYELWNETSAEVADLKKQCDVMVEQYEDVIEDWYKGSQEEDLTTYLCEKHVLKGQDTGCLKETWAGKKGDMAAIAEDKKKKKGKKKKGKDGEDGQKKEKKVKKKKKKSKISDSESSKRRMEAAGFTSDEEEIQKKVPLNQPKTEL.

The N-terminal stretch at 1–16 is a signal peptide; it reads MNVFISVVLFLGSARA. One can recognise a Saposin B-type domain in the interval 30–269; it reads NKCEVCKFVS…EEEIQKKVPL (240 aa). Intrachain disulfides connect C32-C190, C35-C178, and C88-C150. The stretch at 137-162 forms a coiled coil; it reads NETSAEVADLKKQCDVMVEQYEDVIE. The interval 206-276 is disordered; sequence AEDKKKKKGK…VPLNQPKTEL (71 aa). 2 stretches are compositionally biased toward basic residues: residues 210–219 and 228–239; these read KKKKGKKKKG and KEKKVKKKKKKS. The span at 240–252 shows a compositional bias: basic and acidic residues; the sequence is KISDSESSKRRME.

Belongs to the canopy family.

Its subcellular location is the endoplasmic reticulum. Functionally, toll-like receptor (TLR)-specific co-chaperone for HSP90B1. Required for proper TLR folding and hence controls TLR exit from the endoplasmic reticulum. Consequently, required for immune responses. This Danio rerio (Zebrafish) protein is Protein canopy homolog 3 (cnpy3).